Reading from the N-terminus, the 191-residue chain is Oleosin 20.3 kDa (191 aa).

Residue Ala2 is modified to N-acetylalanine. The interval 2–54 (ANVDRDRRVHVDRTDKRVHQPNYEDDVGFGGYGGYGAGSDYKSRGPSTNQILA) is polar. The next 2 membrane-spanning stretches (helical) occupy residues 52 to 72 (ILALIAGVPIGGTLLTLAGLT) and 99 to 119 (LTIGLAVTGILASGLFGLTGL). The interval 55–128 (LIAGVPIGGT…LSSVSWVLNY (74 aa)) is hydrophobic.

The protein belongs to the oleosin family.

Its subcellular location is the lipid droplet. The protein localises to the membrane. In terms of biological role, may have a structural role to stabilize the lipid body during desiccation of the seed by preventing coalescence of the oil. Probably interacts with both lipid and phospholipid moieties of lipid bodies. May also provide recognition signals for specific lipase anchorage in lipolysis during seedling growth. This is Oleosin 20.3 kDa (OL2) from Arabidopsis thaliana (Mouse-ear cress).